A 349-amino-acid polypeptide reads, in one-letter code: Histidinol-phosphate aminotransferase (349 aa).

Lysine 210 bears the N6-(pyridoxal phosphate)lysine mark.

This sequence belongs to the class-II pyridoxal-phosphate-dependent aminotransferase family. Histidinol-phosphate aminotransferase subfamily. Homodimer. Pyridoxal 5'-phosphate serves as cofactor.

The enzyme catalyses L-histidinol phosphate + 2-oxoglutarate = 3-(imidazol-4-yl)-2-oxopropyl phosphate + L-glutamate. It functions in the pathway amino-acid biosynthesis; L-histidine biosynthesis; L-histidine from 5-phospho-alpha-D-ribose 1-diphosphate: step 7/9. The chain is Histidinol-phosphate aminotransferase from Flavobacterium johnsoniae (strain ATCC 17061 / DSM 2064 / JCM 8514 / BCRC 14874 / CCUG 350202 / NBRC 14942 / NCIMB 11054 / UW101) (Cytophaga johnsonae).